The following is a 406-amino-acid chain: MTQMHSTQPMSIGIVIVAAGRGERAGSPEEGPKQYRAIGGRPVIAHTLEKFVTWPQTTKIVIVIHRDDEKLLRSAQETIVDSSGVEIAFGGTTRQQSVLAGVRQLEKTGVSHVMIHDAVRPFFDHDLLDRVAAALAAGAPAVLPAMPVTDTLKRADTDALVTETVPRAGLYAAQTPQSFRLADILAAHEKAAADNKTDFTDDAAIAEWAGLPVTLVAGSADNVKLTIKRDIAMADEKLSAGLLPDVRTGNGYDVHQLEPGDGVTLCGVFIPHDQTLKGHSDADVALHALTDALLATCGAGDIGDHFPPSDPQWRGAPSRIFIEHAARIVRDHGGTIMNADVSLIAEAPKVGPHREAMRAKLSEFLGISLERCSVKATTNEQIGFVGRREGIAAIATATVVYRGGRP.

Residues 1–246 (MTQMHSTQPM…KLSAGLLPDV (246 aa)) form a 2-C-methyl-D-erythritol 4-phosphate cytidylyltransferase region. The segment at 247-406 (RTGNGYDVHQ…ATVVYRGGRP (160 aa)) is 2-C-methyl-D-erythritol 2,4-cyclodiphosphate synthase. Residues D253 and H255 each contribute to the a divalent metal cation site. Residues 253–255 (DVH) and 279–280 (HS) each bind 4-CDP-2-C-methyl-D-erythritol 2-phosphate. H287 provides a ligand contact to a divalent metal cation. 4-CDP-2-C-methyl-D-erythritol 2-phosphate-binding positions include 301 to 303 (DIG), 377 to 380 (TTNE), F384, and R387.

It in the N-terminal section; belongs to the IspD/TarI cytidylyltransferase family. IspD subfamily. The protein in the C-terminal section; belongs to the IspF family. It depends on a divalent metal cation as a cofactor.

It carries out the reaction 2-C-methyl-D-erythritol 4-phosphate + CTP + H(+) = 4-CDP-2-C-methyl-D-erythritol + diphosphate. It catalyses the reaction 4-CDP-2-C-methyl-D-erythritol 2-phosphate = 2-C-methyl-D-erythritol 2,4-cyclic diphosphate + CMP. It functions in the pathway isoprenoid biosynthesis; isopentenyl diphosphate biosynthesis via DXP pathway; isopentenyl diphosphate from 1-deoxy-D-xylulose 5-phosphate: step 2/6. The protein operates within isoprenoid biosynthesis; isopentenyl diphosphate biosynthesis via DXP pathway; isopentenyl diphosphate from 1-deoxy-D-xylulose 5-phosphate: step 4/6. Functionally, bifunctional enzyme that catalyzes the formation of 4-diphosphocytidyl-2-C-methyl-D-erythritol from CTP and 2-C-methyl-D-erythritol 4-phosphate (MEP) (IspD), and catalyzes the conversion of 4-diphosphocytidyl-2-C-methyl-D-erythritol 2-phosphate (CDP-ME2P) to 2-C-methyl-D-erythritol 2,4-cyclodiphosphate (ME-CPP) with a corresponding release of cytidine 5-monophosphate (CMP) (IspF). The sequence is that of Bifunctional enzyme IspD/IspF from Rhizobium rhizogenes (strain K84 / ATCC BAA-868) (Agrobacterium radiobacter).